We begin with the raw amino-acid sequence, 111 residues long: Universal stress protein B (111 aa).

Transmembrane regions (helical) follow at residues 1–21 (MISTVSLFWALCVVCIVNMAR) and 90–110 (FLLTSALCGLVVVSLIALMIW).

Belongs to the universal stress protein B family.

It localises to the cell inner membrane. The protein is Universal stress protein B of Salmonella arizonae (strain ATCC BAA-731 / CDC346-86 / RSK2980).